Reading from the N-terminus, the 283-residue chain is CASP-like protein 4A3 (283 aa).

The tract at residues 1–86 (MRSPAKTMPS…VEETPSPIVV (86 aa)) is disordered. At 1–135 (MRSPAKTMPS…SRREEVVKFS (135 aa)) the chain is on the cytoplasmic side. A compositionally biased stretch (low complexity) spans 9–20 (PSMSPSSVSTEK). The span at 50–79 (SLDHSSESEKEDAKSKPESRRNKNPGKVEE) shows a compositional bias: basic and acidic residues. The helical transmembrane segment at 136-156 (ALGFRLSEVVLALISFSIMAA) threads the bilayer. The Extracellular segment spans residues 157 to 174 (DKTKGWSGDSFDRYKEYR). A helical membrane pass occupies residues 175 to 195 (FCLSVNVVAFVYSSFQACDLA). Over 196-212 (YHLVKEKHLISHHLRPL) the chain is Cytoplasmic. Residues 213 to 233 (FEFIIDQVLAYLLMSASTAAV) traverse the membrane as a helical segment. The Extracellular segment spans residues 234 to 251 (TRVDDWVSNWGKDEFTEM). The helical transmembrane segment at 252–272 (ASASIAMSFLAFLAFAFSSLI) threads the bilayer. Over 273–283 (SGYNLFNQGSL) the chain is Cytoplasmic.

The protein belongs to the Casparian strip membrane proteins (CASP) family. In terms of assembly, homodimer and heterodimers.

The protein resides in the cell membrane. The protein is CASP-like protein 4A3 of Arabidopsis thaliana (Mouse-ear cress).